A 403-amino-acid polypeptide reads, in one-letter code: SEC14-like protein 2 (403 aa).

The residue at position 51 (Lys51) is an N6-succinyllysine. A CRAL-TRIO domain is found at 76–249 (PPEVIQQYLS…EYGGTMTDPD (174 aa)). Lys253 and Lys257 each carry N6-succinyllysine. The 109-residue stretch at 275-383 (KQQYEHSVQI…AKKVNFTVEV (109 aa)) folds into the GOLD domain. Residue Lys393 is modified to N6-succinyllysine.

As to quaternary structure, monomer. In terms of tissue distribution, widely expressed. Strong expression in liver, brain and prostate.

It is found in the cytoplasm. The protein resides in the nucleus. In terms of biological role, carrier protein. Binds to some hydrophobic molecules and promotes their transfer between the different cellular sites. Binds with high affinity to alpha-tocopherol. Also binds with a weaker affinity to other tocopherols and to tocotrienols. May have a transcriptional activatory activity via its association with alpha-tocopherol. Probably recognizes and binds some squalene structure, suggesting that it may regulate cholesterol biosynthesis by increasing the transfer of squalene to a metabolic active pool in the cell. This Homo sapiens (Human) protein is SEC14-like protein 2 (SEC14L2).